A 968-amino-acid polypeptide reads, in one-letter code: RNA polymerase-associated protein RapA (968 aa).

In terms of domain architecture, Helicase ATP-binding spans 164–334 (DVGRRHAPRV…FARLRLLDPN (171 aa)). Position 177 to 184 (177 to 184 (DEVGLGKT)) interacts with ATP. A DEAH box motif is present at residues 280–283 (DEAH). In terms of domain architecture, Helicase C-terminal spans 490–644 (RVEWLMGYLT…TCPTGRTVYD (155 aa)).

This sequence belongs to the SNF2/RAD54 helicase family. RapA subfamily. As to quaternary structure, interacts with the RNAP. Has a higher affinity for the core RNAP than for the holoenzyme. Its ATPase activity is stimulated by binding to RNAP.

Functionally, transcription regulator that activates transcription by stimulating RNA polymerase (RNAP) recycling in case of stress conditions such as supercoiled DNA or high salt concentrations. Probably acts by releasing the RNAP, when it is trapped or immobilized on tightly supercoiled DNA. Does not activate transcription on linear DNA. Probably not involved in DNA repair. In Klebsiella pneumoniae subsp. pneumoniae (strain ATCC 700721 / MGH 78578), this protein is RNA polymerase-associated protein RapA.